Consider the following 232-residue polypeptide: Ribonuclease P protein component 3 (232 aa).

It belongs to the eukaryotic/archaeal RNase P protein component 3 family. As to quaternary structure, consists of a catalytic RNA component and at least 4-5 protein subunits.

The protein resides in the cytoplasm. The catalysed reaction is Endonucleolytic cleavage of RNA, removing 5'-extranucleotides from tRNA precursor.. Part of ribonuclease P, a protein complex that generates mature tRNA molecules by cleaving their 5'-ends. In Halobacterium salinarum (strain ATCC 29341 / DSM 671 / R1), this protein is Ribonuclease P protein component 3.